Consider the following 407-residue polypeptide: 5-aminolevulinate synthase 1 (407 aa).

R21, S137, and K156 together coordinate substrate. Pyridoxal 5'-phosphate-binding residues include S189, H217, and T245. Residue K248 is part of the active site. K248 carries the N6-(pyridoxal phosphate)lysine modification. Residues S277 and T278 each coordinate pyridoxal 5'-phosphate. Substrate is bound at residue T363.

It belongs to the class-II pyridoxal-phosphate-dependent aminotransferase family. In terms of assembly, homodimer. Pyridoxal 5'-phosphate is required as a cofactor.

It carries out the reaction succinyl-CoA + glycine + H(+) = 5-aminolevulinate + CO2 + CoA. Its pathway is porphyrin-containing compound metabolism; protoporphyrin-IX biosynthesis; 5-aminolevulinate from glycine: step 1/1. This Cereibacter sphaeroides (strain ATCC 17023 / DSM 158 / JCM 6121 / CCUG 31486 / LMG 2827 / NBRC 12203 / NCIMB 8253 / ATH 2.4.1.) (Rhodobacter sphaeroides) protein is 5-aminolevulinate synthase 1 (hemA).